The sequence spans 975 residues: Glycine dehydrogenase (decarboxylating) (975 aa).

At Lys723 the chain carries N6-(pyridoxal phosphate)lysine.

This sequence belongs to the GcvP family. The glycine cleavage system is composed of four proteins: P, T, L and H. The cofactor is pyridoxal 5'-phosphate.

It catalyses the reaction N(6)-[(R)-lipoyl]-L-lysyl-[glycine-cleavage complex H protein] + glycine + H(+) = N(6)-[(R)-S(8)-aminomethyldihydrolipoyl]-L-lysyl-[glycine-cleavage complex H protein] + CO2. Functionally, the glycine cleavage system catalyzes the degradation of glycine. The P protein binds the alpha-amino group of glycine through its pyridoxal phosphate cofactor; CO(2) is released and the remaining methylamine moiety is then transferred to the lipoamide cofactor of the H protein. This chain is Glycine dehydrogenase (decarboxylating), found in Burkholderia ambifaria (strain MC40-6).